The following is an 853-amino-acid chain: Eukaryotic translation initiation factor 3 subunit C (853 aa).

The interval 1-78 (MSRFFAASDS…EDEDQNKVLK (78 aa)) is disordered. A compositionally biased stretch (acidic residues) spans 11-46 (SSEESSEEELYSDNEASAQEDSDKDSDDDDSDDDDS). In terms of domain architecture, PCI spans 599–773 (FHMHINLELL…SAIIFRKGVE (175 aa)). Residues 798–853 (TLEQRTQGTANAFERQGGRGGRGGGRGRGGGRGGGVPRGGRNQQFTGGALGRAIQA) are disordered. Positions 815–835 (GRGGRGGGRGRGGGRGGGVPR) are enriched in gly residues.

This sequence belongs to the eIF-3 subunit C family. As to quaternary structure, component of the eukaryotic translation initiation factor 3 (eIF-3) complex.

The protein resides in the cytoplasm. Functionally, component of the eukaryotic translation initiation factor 3 (eIF-3) complex, which is involved in protein synthesis of a specialized repertoire of mRNAs and, together with other initiation factors, stimulates binding of mRNA and methionyl-tRNAi to the 40S ribosome. The eIF-3 complex specifically targets and initiates translation of a subset of mRNAs involved in cell proliferation. This Phaeosphaeria nodorum (strain SN15 / ATCC MYA-4574 / FGSC 10173) (Glume blotch fungus) protein is Eukaryotic translation initiation factor 3 subunit C.